The sequence spans 443 residues: Exodeoxyribonuclease 7 large subunit (443 aa).

Belongs to the XseA family. In terms of assembly, heterooligomer composed of large and small subunits.

It localises to the cytoplasm. It catalyses the reaction Exonucleolytic cleavage in either 5'- to 3'- or 3'- to 5'-direction to yield nucleoside 5'-phosphates.. Functionally, bidirectionally degrades single-stranded DNA into large acid-insoluble oligonucleotides, which are then degraded further into small acid-soluble oligonucleotides. The protein is Exodeoxyribonuclease 7 large subunit of Vibrio parahaemolyticus serotype O3:K6 (strain RIMD 2210633).